Consider the following 306-residue polypeptide: tRNA pseudouridine synthase B (306 aa).

D48 serves as the catalytic Nucleophile.

The protein belongs to the pseudouridine synthase TruB family. Type 1 subfamily.

The catalysed reaction is uridine(55) in tRNA = pseudouridine(55) in tRNA. In terms of biological role, responsible for synthesis of pseudouridine from uracil-55 in the psi GC loop of transfer RNAs. The polypeptide is tRNA pseudouridine synthase B (Haemophilus influenzae (strain PittEE)).